A 243-amino-acid polypeptide reads, in one-letter code: MNTTVNILLGELIGTMVLIILGNGVCASVNYKNMFAKQVGANWLLIALGWGFAVFCGVVISIQVLKGNANLNPAVTVYFMINQKGANIGLLFAMIAMQLLGAMIAQIILNSLNWKHIIENDAEMLKASSCTGPSHRKAWFRNISYEMLGTMILLAGVMAGDYHKLTGVFFVMAIVMSLGSVTGCAINPARDFGPRVIYFLTAKAFNKKLQNPVSADFRYGLVPLLAPIAAGLIMGGFSLLINQ.

2 consecutive transmembrane segments (helical) span residues 7-27 (ILLG…GVCA) and 44-64 (LLIA…SIQV). The NPA 1 signature appears at 72 to 74 (NPA). Helical transmembrane passes span 88 to 108 (IGLL…AQII), 143 to 163 (ISYE…GDYH), and 166 to 186 (TGVF…GCAI). Positions 187–189 (NPA) match the NPA 2 motif. Residues 221–241 (LVPLLAPIAAGLIMGGFSLLI) traverse the membrane as a helical segment.

Belongs to the MIP/aquaporin (TC 1.A.8) family.

The protein localises to the cell membrane. It catalyses the reaction glycerol(in) = glycerol(out). Mediates glycerol diffusion across the cytoplasmic membrane via a pore-type mechanism. This is Probable glycerol uptake facilitator protein (glpF) from Mycoplasmoides gallisepticum (strain R(low / passage 15 / clone 2)) (Mycoplasma gallisepticum).